The primary structure comprises 479 residues: MNSQLQNNDKMIRTRFAPSPTGFLHIGGARTALFNWLLARRHGGAFLLRIEDTDRARSNPAAVEAILDGLSWMGLDWDGEPVSQFERADRHVEIAHELLARGHAFKCYCTAEETQLLRDEAFAAGRALRSPWRDRDASEARADTPFTIRFKAPDSDVVIEDAVQGQVRWAAKEFDDLILLRSDGTPTYNLAVVVDDHDMEITHIVRGDDHLVNAGRQSQIYDAMEWQRPVFAHVPLIHGQDGKKLSKRHGALGAEAYRDMGYLPEGLRNYLLRLGWSHGDQELFSDADAVAAFDLAGLNKAPARMDLDKLNHINGYHLAQASDDRLCELVTPFLDSLENRIEDINLTTARLKAAMPTLKTRAATLEELADQSYFLLRQRPIQLEGKAAKPLKDDETRQRLYRLFTHLGDLKAWNEAALSDALKQFAEAESVGFGKIGQPLRAALTGGAPAPDLALVMTFIGRDETLDRIKDQMTPATTE.

Positions 18–28 match the 'HIGH' region motif; that stretch reads PSPTGFLHIGG. Positions 244–248 match the 'KMSKS' region motif; sequence KLSKR. Residue lysine 247 coordinates ATP.

The protein belongs to the class-I aminoacyl-tRNA synthetase family. Glutamate--tRNA ligase type 1 subfamily. In terms of assembly, monomer.

The protein localises to the cytoplasm. The enzyme catalyses tRNA(Glu) + L-glutamate + ATP = L-glutamyl-tRNA(Glu) + AMP + diphosphate. In terms of biological role, catalyzes the attachment of glutamate to tRNA(Glu) in a two-step reaction: glutamate is first activated by ATP to form Glu-AMP and then transferred to the acceptor end of tRNA(Glu). In Maricaulis maris (strain MCS10) (Caulobacter maris), this protein is Glutamate--tRNA ligase 2.